The primary structure comprises 29 residues: MNIVDIAWAALMVVFTFSLSLVVWGRSGL.

The helical transmembrane segment at 3 to 23 threads the bilayer; sequence IVDIAWAALMVVFTFSLSLVV.

The protein belongs to the PetN family. As to quaternary structure, the 4 large subunits of the cytochrome b6-f complex are cytochrome b6, subunit IV (17 kDa polypeptide, PetD), cytochrome f and the Rieske protein, while the 4 small subunits are PetG, PetL, PetM and PetN. The complex functions as a dimer.

It is found in the plastid. Its subcellular location is the chloroplast thylakoid membrane. Its function is as follows. Component of the cytochrome b6-f complex, which mediates electron transfer between photosystem II (PSII) and photosystem I (PSI), cyclic electron flow around PSI, and state transitions. The protein is Cytochrome b6-f complex subunit 8 of Gnetum parvifolium (Small-leaved jointfir).